The primary structure comprises 547 residues: Calcium-dependent protein kinase 16 (547 aa).

Residues 1 to 53 (MGNCCRSPAAAAREDVKTSHFPASTGGGKKKPHQARNGGGGGGGGGGGGWEKK) form a disordered region. The N-myristoyl glycine moiety is linked to residue Gly-2. Gly residues predominate over residues 37-49 (NGGGGGGGGGGGG). A Protein kinase domain is found at 73–331 (YALDRELGRG…AKQVLEHTWL (259 aa)). ATP is bound by residues 79–87 (LGRGEFGVT) and Lys-102. The active-site Proton acceptor is the Asp-197. The autoinhibitory domain stretch occupies residues 337–367 (APNVPLGDIVKSRLKQFSRMNRFKRRALRVI). 4 consecutive EF-hand domains span residues 374–409 (EEVE…FGSH), 410–445 (LAES…LQRM), 446–481 (ANGE…DGAT), and 482–517 (DIME…GTDW). Residues Asp-387, Asp-389, Asp-391, Glu-398, Asp-423, Asn-425, Glu-434, Asp-459, Asp-461, Asn-463, Tyr-465, Glu-470, Asp-495, Asp-497, Asp-499, Lys-501, and Glu-506 each coordinate Ca(2+).

Belongs to the protein kinase superfamily. Ser/Thr protein kinase family. CDPK subfamily.

The protein resides in the membrane. The enzyme catalyses L-seryl-[protein] + ATP = O-phospho-L-seryl-[protein] + ADP + H(+). The catalysed reaction is L-threonyl-[protein] + ATP = O-phospho-L-threonyl-[protein] + ADP + H(+). With respect to regulation, activated by calcium. Autophosphorylation may play an important role in the regulation of the kinase activity. Functionally, may play a role in signal transduction pathways that involve calcium as a second messenger. This is Calcium-dependent protein kinase 16 from Oryza sativa subsp. japonica (Rice).